The chain runs to 473 residues: Ribulose bisphosphate carboxylase large chain (473 aa).

Substrate is bound by residues Asn-116 and Thr-166. Lys-168 functions as the Proton acceptor in the catalytic mechanism. Lys-170 contributes to the substrate binding site. Mg(2+)-binding residues include Lys-194, Asp-196, and Glu-197. Lys-194 carries the N6-carboxylysine modification. His-287 (proton acceptor) is an active-site residue. Residues Arg-288, His-320, and Ser-372 each coordinate substrate.

This sequence belongs to the RuBisCO large chain family. Type I subfamily. In terms of assembly, heterohexadecamer of 8 large chains and 8 small chains. Mg(2+) serves as cofactor.

The enzyme catalyses 2 (2R)-3-phosphoglycerate + 2 H(+) = D-ribulose 1,5-bisphosphate + CO2 + H2O. The catalysed reaction is D-ribulose 1,5-bisphosphate + O2 = 2-phosphoglycolate + (2R)-3-phosphoglycerate + 2 H(+). In terms of biological role, ruBisCO catalyzes two reactions: the carboxylation of D-ribulose 1,5-bisphosphate, the primary event in carbon dioxide fixation, as well as the oxidative fragmentation of the pentose substrate. Both reactions occur simultaneously and in competition at the same active site. This chain is Ribulose bisphosphate carboxylase large chain, found in Alkalilimnicola ehrlichii (strain ATCC BAA-1101 / DSM 17681 / MLHE-1).